A 60-amino-acid polypeptide reads, in one-letter code: MKNYCGIITLFLAIISATGVFCVDFPNKGGKCDRKECRKTCKKLNYRGKCFPNYCRCFPG.

Positions 1 to 22 (MKNYCGIITLFLAIISATGVFC) are cleaved as a signal peptide. 3 cysteine pairs are disulfide-bonded: Cys-32/Cys-50, Cys-37/Cys-55, and Cys-41/Cys-57. Pro-59 carries the proline amide modification.

It belongs to the short scorpion toxin superfamily. Potassium channel inhibitor family. Expressed by the venom gland.

It is found in the secreted. In terms of biological role, may block voltage-gated potassium channels (Kv). The chain is Potassium channel toxin MeuTXKalpha3 from Mesobuthus eupeus (Lesser Asian scorpion).